The following is a 374-amino-acid chain: Glycerophosphodiester phosphodiesterase GDPD2 (374 aa).

One can recognise a GP-PDE domain in the interval 38–326; it reads FSVIGHRGIG…DFVEEIIEST (289 aa). Residues 330–349 are disordered; that stretch reads MIRPPPSSSPLPSPSKDDDV. The span at 332 to 342 shows a compositional bias: pro residues; that stretch reads RPPPSSSPLPS.

This sequence belongs to the glycerophosphoryl diester phosphodiesterase family. As to expression, expressed in roots, shoots, flowers and siliques.

It carries out the reaction a sn-glycero-3-phosphodiester + H2O = an alcohol + sn-glycerol 3-phosphate + H(+). In Arabidopsis thaliana (Mouse-ear cress), this protein is Glycerophosphodiester phosphodiesterase GDPD2.